A 287-amino-acid polypeptide reads, in one-letter code: Viomycin phosphotransferase (287 aa).

Residue Asp-190 is the Proton acceptor of the active site.

This sequence belongs to the aminoglycoside phosphotransferase family.

The catalysed reaction is viomycin + ATP = O-phosphoviomycin + ADP + H(+). Functionally, the aminoglycoside phosphotransferases achieve inactivation of their antibiotic substrates by phosphorylation. This chain is Viomycin phosphotransferase (vph), found in Streptomyces vinaceus.